Consider the following 853-residue polypeptide: E3 ubiquitin-protein ligase RNF216 (853 aa).

Disordered regions lie at residues 33-102 (TISD…DDIV), 125-152 (PLEVQNQSSEDSETELLSNPGEPAASVD), and 165-228 (PYFQ…AHPL). Acidic residues predominate over residues 53–73 (QQEDDLDDDVILTEDDSEDEY). A Glycyl lysine isopeptide (Lys-Gly) (interchain with G-Cter in SUMO2) cross-link involves residue Lys89. Residues Lys339 and Lys342 each participate in a glycyl lysine isopeptide (Lys-Gly) (interchain with G-Cter in SUMO2) cross-link. Ser407 bears the Phosphoserine mark. Residues Lys413, Lys418, Lys436, Lys447, and Lys473 each participate in a glycyl lysine isopeptide (Lys-Gly) (interchain with G-Cter in SUMO2) cross-link. The stretch at 463–479 (VKQEQEFYEQKIKEMAE) forms a coiled coil. Residues 499-716 (QLIECRCCYG…SPGAPCQECS (218 aa)) are TRIAD supradomain. Residues Cys503, Cys506, Cys525, Cys528, Cys593, and Cys596 each coordinate Zn(2+). The RING-type 1 zinc-finger motif lies at 503-552 (CRCCYGEFPFEELTQCADAHLFCKECLIRYAQEAVFGSGKSELSCMEGSC). Residues 571–636 (YKYYERKAEE…LWKEHNGLTC (66 aa)) form an IBR-type zinc finger. Lys607 is covalently cross-linked (Glycyl lysine isopeptide (Lys-Gly) (interchain with G-Cter in SUMO2)). Residues Cys611, Cys616, Cys621, Cys624, His631, and Cys636 each coordinate Zn(2+). Glycyl lysine isopeptide (Lys-Gly) (interchain with G-Cter in SUMO2) cross-links involve residues Lys646 and Lys654. Positions 663 and 666 each coordinate Zn(2+). Residues 663-691 (CHKCGTGLIKSEGCNRMSCRCGAQMCYLC) form an RING-type 2; atypical zinc finger. Cys676 is a catalytic residue. The Zn(2+) site is built by Cys681, Cys683, Cys688, Cys691, His704, and Cys712. Residues 725-751 (TEDDEKLIEEIQKEAEEEQKRKNGENT) are a coiled coil. Residues Lys753 and Lys761 each participate in a glycyl lysine isopeptide (Lys-Gly) (interchain with G-Cter in SUMO2) cross-link.

Interacts with UBE2L3 and to some extent with UBE2L6. Interacts with TRAF3, TLR3, TLR4, TLR5 and TLR9. Isoform 3/ZIN binds RIPK1. In terms of processing, auto-ubiquitinated. Post-translationally, phosphorylation at Ser-719 enhances acceptor ubiquitin binding and chain-type specificity towards 'Lys-63' di-ubiquitin but not di-ubiquitin with other linkage types.

The protein resides in the cytoplasm. It is found in the cytoplasmic vesicle. The protein localises to the clathrin-coated vesicle. The enzyme catalyses S-ubiquitinyl-[E2 ubiquitin-conjugating enzyme]-L-cysteine + [acceptor protein]-L-lysine = [E2 ubiquitin-conjugating enzyme]-L-cysteine + N(6)-ubiquitinyl-[acceptor protein]-L-lysine.. It participates in protein modification; protein ubiquitination. With respect to regulation, allosterically activated by 'Lys-63'-linked di-ubiquitin. In terms of biological role, E3 ubiquitin ligase which accepts ubiquitin from specific E2 ubiquitin-conjugating enzymes, and then transfers it to substrates promoting their ubiquitination. Plays a role in the regulation of antiviral responses by promoting the degradation of TRAF3, TLR4 and TLR9. In turn, down-regulates NF-kappa-B and IRF3 activation as well as beta interferon production. Also participates in the regulation of autophagy by ubiquitinating BECN1 leading to its degradation and autophagy inhibition. Plays a role in ARC-dependent synaptic plasticity by mediating ARC ubiquitination resulting in its rapid proteasomal degradation. Plays aso an essential role in spermatogenesis and male fertility. Mechanistically, regulates meiosis by promoting the degradation of PRKACB through the ubiquitin-mediated lysosome pathway. Modulates the gonadotropin-releasing hormone signal pathway by affecting the stability of STAU2 that is required for the microtubule-dependent transport of neuronal RNA from the cell body to the dendrite. This chain is E3 ubiquitin-protein ligase RNF216 (Rnf216), found in Mus musculus (Mouse).